Reading from the N-terminus, the 158-residue chain is MDARTIIESLTGKFPEAISEAGIESPIRIRAYVDKDKAKEVCEYLKGSLQFDHLCSVSGVDYPQRDELEAVYHIASYDHPVVLMLKARLPRDSPEIESVVSVYWNANWYERETYELYGIFFKNHPELKPLVLPDDMLGEWPLRKDYEGFPNRTARNLV.

The protein belongs to the complex I 30 kDa subunit family. The FPO complex is composed of at least 13 different subunits.

It is found in the cell membrane. It catalyses the reaction methanophenazine + reduced coenzyme F420-(gamma-L-Glu)(n) = dihydromethanophenazine + oxidized coenzyme F420-(gamma-L-Glu)(n) + H(+). Component of the F(420)H(2) dehydrogenase (FPO complex) which is part of the energy-conserving F(420)H(2):heterodisulfide oxidoreductase system. The membrane-bound electron transfer system of the complex plays an important role in the metabolism of methylotrophic methanogens when the organisms grow on methanol or methylamines. Catalyzes the oxidation of methanophenazine to dihydromethanophenazine. It shuttles electrons from F(420)H(2), via FAD and iron-sulfur (Fe-S) centers, to methanophenazine (an electron carrier in the membrane). It couples the redox reaction to proton translocation (for every two electrons transferred, two hydrogen ions are translocated across the cytoplasmic membrane), and thus conserves the redox energy in a proton gradient. It also catalyzes the oxidation of F(420)H(2) with quinones such as 2,3-dimethyl-1,4-naphthoquinone, 2-methyl-1,4-naphthoquinone and tetramethyl-p-benzoquinone. The chain is F(420)H(2) dehydrogenase subunit C (fpoC) from Methanosarcina mazei (strain ATCC BAA-159 / DSM 3647 / Goe1 / Go1 / JCM 11833 / OCM 88) (Methanosarcina frisia).